A 73-amino-acid chain; its full sequence is Cell division protein ZapB (73 aa).

The stretch at 3-66 forms a coiled coil; that stretch reads LELLSQLETK…SWSDKVNGLV (64 aa).

The protein belongs to the ZapB family. In terms of assembly, homodimer. The ends of the coiled-coil dimer bind to each other, forming polymers. Interacts with FtsZ.

It localises to the cytoplasm. Non-essential, abundant cell division factor that is required for proper Z-ring formation. It is recruited early to the divisome by direct interaction with FtsZ, stimulating Z-ring assembly and thereby promoting cell division earlier in the cell cycle. Its recruitment to the Z-ring requires functional FtsA or ZipA. The sequence is that of Cell division protein ZapB from Shewanella frigidimarina (strain NCIMB 400).